Consider the following 218-residue polypeptide: Ribonuclease HII (218 aa).

An RNase H type-2 domain is found at 23 to 216; it reads RFLCGVDEAG…VREAIARGLV (194 aa). A divalent metal cation contacts are provided by Asp-29, Glu-30, and Asp-125.

The protein belongs to the RNase HII family. The cofactor is Mn(2+). Mg(2+) is required as a cofactor.

The protein localises to the cytoplasm. The catalysed reaction is Endonucleolytic cleavage to 5'-phosphomonoester.. Endonuclease that specifically degrades the RNA of RNA-DNA hybrids. The polypeptide is Ribonuclease HII (Cupriavidus pinatubonensis (strain JMP 134 / LMG 1197) (Cupriavidus necator (strain JMP 134))).